Consider the following 704-residue polypeptide: DNA ligase (704 aa).

NAD(+) is bound by residues 43–47 (DADYD), 92–93 (SL), and Glu-124. Lys-126 functions as the N6-AMP-lysine intermediate in the catalytic mechanism. Residues Arg-147, Glu-182, Lys-298, and Lys-322 each coordinate NAD(+). 4 residues coordinate Zn(2+): Cys-427, Cys-430, Cys-445, and Cys-451. In terms of domain architecture, BRCT spans 625 to 704 (PVASPVAGRI…DGWLRLIGDA (80 aa)).

This sequence belongs to the NAD-dependent DNA ligase family. LigA subfamily. Mg(2+) is required as a cofactor. Mn(2+) serves as cofactor.

The enzyme catalyses NAD(+) + (deoxyribonucleotide)n-3'-hydroxyl + 5'-phospho-(deoxyribonucleotide)m = (deoxyribonucleotide)n+m + AMP + beta-nicotinamide D-nucleotide.. Functionally, DNA ligase that catalyzes the formation of phosphodiester linkages between 5'-phosphoryl and 3'-hydroxyl groups in double-stranded DNA using NAD as a coenzyme and as the energy source for the reaction. It is essential for DNA replication and repair of damaged DNA. This Cereibacter sphaeroides (strain KD131 / KCTC 12085) (Rhodobacter sphaeroides) protein is DNA ligase.